Reading from the N-terminus, the 60-residue chain is Large ribosomal subunit protein bL32 (60 aa).

The disordered stretch occupies residues 1 to 60 (MAVQQNKKSPSKRGMHRSHNALTVPGIAVEPTTGETHMRHHISPNGFYRGRQVLKNKSEA). Residues 9–19 (SPSKRGMHRSH) are compositionally biased toward basic residues.

It belongs to the bacterial ribosomal protein bL32 family.

This Acidovorax ebreus (strain TPSY) (Diaphorobacter sp. (strain TPSY)) protein is Large ribosomal subunit protein bL32.